Reading from the N-terminus, the 442-residue chain is Tubulin beta chain (442 aa).

GTP contacts are provided by glutamine 11, glutamate 69, serine 138, glycine 142, threonine 143, glycine 144, asparagine 204, and asparagine 226. Glutamate 69 contacts Mg(2+).

This sequence belongs to the tubulin family. As to quaternary structure, dimer of alpha and beta chains. A typical microtubule is a hollow water-filled tube with an outer diameter of 25 nm and an inner diameter of 15 nM. Alpha-beta heterodimers associate head-to-tail to form protofilaments running lengthwise along the microtubule wall with the beta-tubulin subunit facing the microtubule plus end conferring a structural polarity. Microtubules usually have 13 protofilaments but different protofilament numbers can be found in some organisms and specialized cells. Mg(2+) is required as a cofactor.

It localises to the cytoplasm. The protein localises to the cytoskeleton. Functionally, tubulin is the major constituent of microtubules, a cylinder consisting of laterally associated linear protofilaments composed of alpha- and beta-tubulin heterodimers. Microtubules grow by the addition of GTP-tubulin dimers to the microtubule end, where a stabilizing cap forms. Below the cap, tubulin dimers are in GDP-bound state, owing to GTPase activity of alpha-tubulin. This Pneumocystis carinii protein is Tubulin beta chain (TUB-B).